We begin with the raw amino-acid sequence, 253 residues long: 5-oxoprolinase subunit A (253 aa).

This sequence belongs to the LamB/PxpA family. In terms of assembly, forms a complex composed of PxpA, PxpB and PxpC.

It carries out the reaction 5-oxo-L-proline + ATP + 2 H2O = L-glutamate + ADP + phosphate + H(+). Functionally, catalyzes the cleavage of 5-oxoproline to form L-glutamate coupled to the hydrolysis of ATP to ADP and inorganic phosphate. In Bacillus cereus (strain ATCC 14579 / DSM 31 / CCUG 7414 / JCM 2152 / NBRC 15305 / NCIMB 9373 / NCTC 2599 / NRRL B-3711), this protein is 5-oxoprolinase subunit A.